Here is a 325-residue protein sequence, read N- to C-terminus: Elongation factor P--(R)-beta-lysine ligase (325 aa).

Residue 76–78 (SPE) participates in substrate binding. Residues 100-102 (RNE) and Asn109 contribute to the ATP site. Tyr118 contributes to the substrate binding site. An ATP-binding site is contributed by 244–245 (EL). Glu251 serves as a coordination point for substrate. Residue Gly300 coordinates ATP.

This sequence belongs to the class-II aminoacyl-tRNA synthetase family. EpmA subfamily. In terms of assembly, homodimer.

It catalyses the reaction D-beta-lysine + L-lysyl-[protein] + ATP = N(6)-((3R)-3,6-diaminohexanoyl)-L-lysyl-[protein] + AMP + diphosphate + H(+). With EpmB is involved in the beta-lysylation step of the post-translational modification of translation elongation factor P (EF-P) on 'Lys-34'. Catalyzes the ATP-dependent activation of (R)-beta-lysine produced by EpmB, forming a lysyl-adenylate, from which the beta-lysyl moiety is then transferred to the epsilon-amino group of EF-P 'Lys-34'. This chain is Elongation factor P--(R)-beta-lysine ligase, found in Salmonella typhi.